We begin with the raw amino-acid sequence, 278 residues long: 4-deoxy-L-threo-5-hexosulose-uronate ketol-isomerase (278 aa).

Zn(2+) is bound by residues H196, H198, E203, and H245.

This sequence belongs to the KduI family. Zn(2+) is required as a cofactor.

The enzyme catalyses 5-dehydro-4-deoxy-D-glucuronate = 3-deoxy-D-glycero-2,5-hexodiulosonate. It functions in the pathway glycan metabolism; pectin degradation; 2-dehydro-3-deoxy-D-gluconate from pectin: step 4/5. Its function is as follows. Catalyzes the isomerization of 5-dehydro-4-deoxy-D-glucuronate to 3-deoxy-D-glycero-2,5-hexodiulosonate. The sequence is that of 4-deoxy-L-threo-5-hexosulose-uronate ketol-isomerase from Shigella flexneri serotype 5b (strain 8401).